The sequence spans 383 residues: Homeobox protein knotted-1-like 5 (383 aa).

2 disordered regions span residues Met1–Glu35 and Thr52–Asn73. Positions Glu281–Ile301 constitute an ELK domain. Positions Met302–Asn365 form a DNA-binding region, homeobox; TALE-type. The interval Asn361 to Ser383 is disordered. Over residues Trp362–Thr373 the composition is skewed to low complexity. Over residues Lys374–Ser383 the composition is skewed to basic residues.

This sequence belongs to the TALE/KNOX homeobox family. May form heterodimeric complex with the TALE/BELL protein BEL1, BLH1 and BLH2. Interacts with OFP1, OFP2, OFP3 and OFP4.

It is found in the nucleus. This chain is Homeobox protein knotted-1-like 5 (KNAT5), found in Arabidopsis thaliana (Mouse-ear cress).